Here is a 521-residue protein sequence, read N- to C-terminus: Glutamate--cysteine ligase (521 aa).

It belongs to the glutamate--cysteine ligase type 1 family. Type 1 subfamily.

The enzyme catalyses L-cysteine + L-glutamate + ATP = gamma-L-glutamyl-L-cysteine + ADP + phosphate + H(+). It participates in sulfur metabolism; glutathione biosynthesis; glutathione from L-cysteine and L-glutamate: step 1/2. The polypeptide is Glutamate--cysteine ligase (gshA) (Buchnera aphidicola subsp. Baizongia pistaciae (strain Bp)).